A 262-amino-acid polypeptide reads, in one-letter code: DNA-directed RNA polymerase subunit Rpo3 (262 aa).

The protein belongs to the archaeal Rpo3/eukaryotic RPB3 RNA polymerase subunit family. Part of the RNA polymerase complex.

It localises to the cytoplasm. It catalyses the reaction RNA(n) + a ribonucleoside 5'-triphosphate = RNA(n+1) + diphosphate. DNA-dependent RNA polymerase (RNAP) catalyzes the transcription of DNA into RNA using the four ribonucleoside triphosphates as substrates. In Pyrobaculum islandicum (strain DSM 4184 / JCM 9189 / GEO3), this protein is DNA-directed RNA polymerase subunit Rpo3.